The chain runs to 482 residues: Cardiolipin synthase (482 aa).

A run of 2 helical transmembrane segments spans residues 4-24 (LAYL…VTVF) and 34-54 (WAWL…YLIF). PLD phosphodiesterase domains lie at 217–244 (LNYR…GDEY) and 395–422 (DNGF…DFRS). Active-site residues include His222, Lys224, Asp229, His400, Lys402, and Asp407.

It belongs to the phospholipase D family. Cardiolipin synthase subfamily.

The protein localises to the cell membrane. It catalyses the reaction 2 a 1,2-diacyl-sn-glycero-3-phospho-(1'-sn-glycerol) = a cardiolipin + glycerol. Catalyzes the reversible phosphatidyl group transfer from one phosphatidylglycerol molecule to another to form cardiolipin (CL) (diphosphatidylglycerol) and glycerol. This Listeria monocytogenes serotype 4b (strain CLIP80459) protein is Cardiolipin synthase (cls).